Reading from the N-terminus, the 229-residue chain is NAD(P)H-hydrate epimerase (229 aa).

Positions Ala-10–Leu-217 constitute a YjeF N-terminal domain. Asn-60 to Asp-64 serves as a coordination point for (6S)-NADPHX. The K(+) site is built by Asn-61 and Asp-125. (6S)-NADPHX is bound by residues Gly-129–Pro-135 and Asp-158. K(+) is bound at residue Ser-161.

The protein belongs to the NnrE/AIBP family. Requires K(+) as cofactor.

It catalyses the reaction (6R)-NADHX = (6S)-NADHX. The enzyme catalyses (6R)-NADPHX = (6S)-NADPHX. In terms of biological role, catalyzes the epimerization of the S- and R-forms of NAD(P)HX, a damaged form of NAD(P)H that is a result of enzymatic or heat-dependent hydration. This is a prerequisite for the S-specific NAD(P)H-hydrate dehydratase to allow the repair of both epimers of NAD(P)HX. The sequence is that of NAD(P)H-hydrate epimerase from Drosophila ananassae (Fruit fly).